Consider the following 207-residue polypeptide: rRNA N(6)-adenosine-methyltransferase METTL5 (207 aa).

Residues Gln-25, Thr-28, Gly-56, Cys-59, Val-61, Asp-78, and 105 to 106 contribute to the S-adenosyl-L-methionine site; that span reads DV.

The protein belongs to the methyltransferase superfamily. PrmA family.

It is found in the nucleus. The protein localises to the presynapse. Its subcellular location is the postsynapse. The enzyme catalyses adenosine(1832) in 18S rRNA + S-adenosyl-L-methionine = N(6)-methyladenosine(1832) in 18S rRNA + S-adenosyl-L-homocysteine + H(+). RRNA N6-adenosine-methyltransferase activity is inhibited by zinc. Its function is as follows. Catalytic subunit of a heterodimer with TRMT112, which specifically methylates the 6th position of adenine in position 1832 of 18S rRNA. N6-methylation of adenine(1832) in 18S rRNA resides in the decoding center of 18S rRNA and is required for translation and embryonic stem cells (ESCs) pluripotency and differentiation. The polypeptide is rRNA N(6)-adenosine-methyltransferase METTL5 (Danio rerio (Zebrafish)).